The following is a 116-amino-acid chain: Nucleoid-associated protein PMM0020 (116 aa).

Basic and acidic residues predominate over residues 87 to 98; the sequence is ESSTTTMKERMN. Residues 87 to 116 are disordered; it reads ESSTTTMKERMNDLTGGLNLNLPGLDNNDS. Over residues 99–116 the composition is skewed to low complexity; the sequence is DLTGGLNLNLPGLDNNDS.

The protein belongs to the YbaB/EbfC family. Homodimer.

It is found in the cytoplasm. The protein resides in the nucleoid. Its function is as follows. Binds to DNA and alters its conformation. May be involved in regulation of gene expression, nucleoid organization and DNA protection. The chain is Nucleoid-associated protein PMM0020 from Prochlorococcus marinus subsp. pastoris (strain CCMP1986 / NIES-2087 / MED4).